The sequence spans 62 residues: Photosystem II reaction center protein Z (62 aa).

The next 2 helical transmembrane spans lie at 8 to 28 (ALIA…VAYA) and 41 to 61 (YLGS…NFFV).

Belongs to the PsbZ family. In terms of assembly, PSII is composed of 1 copy each of membrane proteins PsbA, PsbB, PsbC, PsbD, PsbE, PsbF, PsbH, PsbI, PsbJ, PsbK, PsbL, PsbM, PsbT, PsbX, PsbY, PsbZ, Psb30/Ycf12, peripheral proteins PsbO, CyanoQ (PsbQ), PsbU, PsbV and a large number of cofactors. It forms dimeric complexes.

Its subcellular location is the cellular thylakoid membrane. Its function is as follows. May control the interaction of photosystem II (PSII) cores with the light-harvesting antenna, regulates electron flow through the 2 photosystem reaction centers. PSII is a light-driven water plastoquinone oxidoreductase, using light energy to abstract electrons from H(2)O, generating a proton gradient subsequently used for ATP formation. The polypeptide is Photosystem II reaction center protein Z (Rippkaea orientalis (strain PCC 8801 / RF-1) (Cyanothece sp. (strain PCC 8801))).